The chain runs to 53 residues: Tryptophan RNA-binding attenuator protein inhibitory protein (53 aa).

CXXCXGXG motif repeat units lie at residues Cys12 to Gly19 and Cys26 to Gly33.

In terms of assembly, homopentamer or homohexamer.

It localises to the cytoplasm. In terms of biological role, by forming a complex with tryptophan-activated TRAP, and masking its RNA binding site, it inhibits TRAP's RNA binding ability, thereby abolishing TRAP regulation of gene expression, leading to antitermination and increased trp operon expression. AT acts by competing with messenger RNA for the RNA binding domain of TRAP. In Bacillus subtilis (strain 168), this protein is Tryptophan RNA-binding attenuator protein inhibitory protein (rtpA).